The sequence spans 402 residues: Putative RNA-guided DNA endonuclease InsQ (402 aa).

Catalysis depends on residues Asp183 and Glu267. Positions 334, 337, 353, and 356 each coordinate Zn(2+). The active site involves Asp363.

In the N-terminal section; belongs to the transposase 2 family. The protein in the C-terminal section; belongs to the transposase 35 family.

An RNA-guided dsDNA endonuclease. When guided by an RNA derived from the right-end element of its insertion sequence element (IS), cleaves DNA downstream of the transposon-associated motif (TAM). Cleaves supercoiled and linear DNA in a staggered manner 15-21 bases from the TAM yielding 5'-overhangs. Binds reRNA, an approximately 150 nucleotide base sRNA derived from the 3' end of its own gene, the right end (RE) of the insertion sequence (IS) plus sequence downstream of the IS. In terms of biological role, not required for transposition of the insertion element. The corresponding transposase in strains MG1655 and W3110 is a truncated pseudogene (yncK). In Escherichia coli (strain K12), this protein is Putative RNA-guided DNA endonuclease InsQ (insQ).